A 513-amino-acid chain; its full sequence is Cytochrome P450 4p1 (513 aa).

Heme contacts are provided by Glu320 and Cys459.

Belongs to the cytochrome P450 family. The cofactor is heme.

It localises to the endoplasmic reticulum membrane. Its subcellular location is the microsome membrane. Its function is as follows. May be involved in the metabolism of insect hormones and in the breakdown of synthetic insecticides. In Drosophila melanogaster (Fruit fly), this protein is Cytochrome P450 4p1 (Cyp4p1).